The sequence spans 210 residues: Redox-sensing transcriptional repressor Rex (210 aa).

Positions 16 to 55 (IYSRFLKRLDKKGITTVSSGDIAEGVGVSPAQVRKDLAYF) form a DNA-binding region, H-T-H motif. Residue 90 to 95 (GAGNLG) participates in NAD(+) binding.

This sequence belongs to the transcriptional regulatory Rex family. Homodimer.

The protein resides in the cytoplasm. Modulates transcription in response to changes in cellular NADH/NAD(+) redox state. In Desulforamulus reducens (strain ATCC BAA-1160 / DSM 100696 / MI-1) (Desulfotomaculum reducens), this protein is Redox-sensing transcriptional repressor Rex.